Reading from the N-terminus, the 250-residue chain is Acetylglutamate kinase (250 aa).

Substrate-binding positions include 41 to 42, Arg-63, and Asn-156; that span reads GG.

It belongs to the acetylglutamate kinase family. ArgB subfamily.

It is found in the cytoplasm. It carries out the reaction N-acetyl-L-glutamate + ATP = N-acetyl-L-glutamyl 5-phosphate + ADP. Its pathway is amino-acid biosynthesis; L-arginine biosynthesis; N(2)-acetyl-L-ornithine from L-glutamate: step 2/4. Catalyzes the ATP-dependent phosphorylation of N-acetyl-L-glutamate. The polypeptide is Acetylglutamate kinase (Listeria welshimeri serovar 6b (strain ATCC 35897 / DSM 20650 / CCUG 15529 / CIP 8149 / NCTC 11857 / SLCC 5334 / V8)).